We begin with the raw amino-acid sequence, 104 residues long: Large ribosomal subunit protein uL23 (104 aa).

The protein belongs to the universal ribosomal protein uL23 family. Part of the 50S ribosomal subunit. Contacts protein L29, and trigger factor when it is bound to the ribosome.

Functionally, one of the early assembly proteins it binds 23S rRNA. One of the proteins that surrounds the polypeptide exit tunnel on the outside of the ribosome. Forms the main docking site for trigger factor binding to the ribosome. In Leptospira interrogans serogroup Icterohaemorrhagiae serovar copenhageni (strain Fiocruz L1-130), this protein is Large ribosomal subunit protein uL23.